A 468-amino-acid chain; its full sequence is Homocitrate synthase (468 aa).

One can recognise a Pyruvate carboxyltransferase domain in the interval 11 to 266 (VGILDSTLRE…IEVVDLKKLS (256 aa)). R19 contributes to the 2-oxoglutarate binding site. E20 is a binding site for Mg(2+). 2-oxoglutarate contacts are provided by H83, R143, and T177. The Mg(2+) site is built by H205 and H207. H299 (proton acceptor) is an active-site residue.

This sequence belongs to the alpha-IPM synthase/homocitrate synthase family. Homocitrate synthase LYS20/LYS21 subfamily. Requires Mg(2+) as cofactor. It depends on Mn(2+) as a cofactor.

The catalysed reaction is acetyl-CoA + 2-oxoglutarate + H2O = (2R)-homocitrate + CoA + H(+). Its pathway is amino-acid biosynthesis; L-lysine biosynthesis via AAA pathway; L-alpha-aminoadipate from 2-oxoglutarate: step 1/5. Its activity is regulated as follows. Inhibited by lysine. Its function is as follows. Catalyzes the aldol-type condensation of 2-oxoglutarate with acetyl-CoA to yield homocitrate. Carries out the first step of the alpha-aminoadipate (AAA) lysine biosynthesis pathway. Does not display 2-isopropylmalate synthase and citramalate synthase activities since it cannot use 2-oxoisovalerate or pyruvate as substrate. The protein is Homocitrate synthase of Sulfolobus acidocaldarius (strain ATCC 33909 / DSM 639 / JCM 8929 / NBRC 15157 / NCIMB 11770).